A 322-amino-acid chain; its full sequence is Uracil-DNA glycosylase (322 aa).

The Proton acceptor role is filled by Asp-142.

Belongs to the uracil-DNA glycosylase (UDG) superfamily. UNG family.

Its subcellular location is the mitochondrion. It localises to the nucleus. It catalyses the reaction Hydrolyzes single-stranded DNA or mismatched double-stranded DNA and polynucleotides, releasing free uracil.. Functionally, excises uracil residues from the DNA which can arise as a result of misincorporation of dUMP residues by DNA polymerase or due to deamination of cytosine. In Schizosaccharomyces pombe (strain 972 / ATCC 24843) (Fission yeast), this protein is Uracil-DNA glycosylase (ung1).